A 101-amino-acid chain; its full sequence is Large ribosomal subunit protein uL23 (101 aa).

Belongs to the universal ribosomal protein uL23 family. In terms of assembly, part of the 50S ribosomal subunit. Contacts protein L29, and trigger factor when it is bound to the ribosome.

In terms of biological role, one of the early assembly proteins it binds 23S rRNA. One of the proteins that surrounds the polypeptide exit tunnel on the outside of the ribosome. Forms the main docking site for trigger factor binding to the ribosome. This Rhodococcus erythropolis (strain PR4 / NBRC 100887) protein is Large ribosomal subunit protein uL23.